The primary structure comprises 396 residues: Glutamyl-tRNA reductase (396 aa).

Substrate-binding positions include 45 to 48 (TCNR), Ser101, 106 to 108 (EDQ), and Gln112. Cys46 acts as the Nucleophile in catalysis. Residue 177–182 (GFGDVG) participates in NADP(+) binding.

It belongs to the glutamyl-tRNA reductase family. Homodimer.

It carries out the reaction (S)-4-amino-5-oxopentanoate + tRNA(Glu) + NADP(+) = L-glutamyl-tRNA(Glu) + NADPH + H(+). The protein operates within porphyrin-containing compound metabolism; protoporphyrin-IX biosynthesis; 5-aminolevulinate from L-glutamyl-tRNA(Glu): step 1/2. In terms of biological role, catalyzes the NADPH-dependent reduction of glutamyl-tRNA(Glu) to glutamate 1-semialdehyde (GSA). The chain is Glutamyl-tRNA reductase from Clostridium acetobutylicum (strain ATCC 824 / DSM 792 / JCM 1419 / IAM 19013 / LMG 5710 / NBRC 13948 / NRRL B-527 / VKM B-1787 / 2291 / W).